A 714-amino-acid polypeptide reads, in one-letter code: Fatty acid oxidation complex subunit alpha (714 aa).

Residues 1 to 190 (MEMASAFTLN…KLGLVDDVVP (190 aa)) form an enoyl-CoA hydratase region. The segment at 306-714 (APLNSVGILG…FWKTTATDLQ (409 aa)) is 3-hydroxyacyl-CoA dehydrogenase.

The protein in the N-terminal section; belongs to the enoyl-CoA hydratase/isomerase family. It in the central section; belongs to the 3-hydroxyacyl-CoA dehydrogenase family. Heterotetramer of two alpha chains (FadJ) and two beta chains (FadI).

It localises to the cytoplasm. It catalyses the reaction a (3S)-3-hydroxyacyl-CoA = a (2E)-enoyl-CoA + H2O. The enzyme catalyses a 4-saturated-(3S)-3-hydroxyacyl-CoA = a (3E)-enoyl-CoA + H2O. It carries out the reaction a (3S)-3-hydroxyacyl-CoA + NAD(+) = a 3-oxoacyl-CoA + NADH + H(+). The catalysed reaction is (3S)-3-hydroxybutanoyl-CoA = (3R)-3-hydroxybutanoyl-CoA. It participates in lipid metabolism; fatty acid beta-oxidation. Functionally, catalyzes the formation of a hydroxyacyl-CoA by addition of water on enoyl-CoA. Also exhibits 3-hydroxyacyl-CoA epimerase and 3-hydroxyacyl-CoA dehydrogenase activities. The protein is Fatty acid oxidation complex subunit alpha of Escherichia coli O6:K15:H31 (strain 536 / UPEC).